Reading from the N-terminus, the 156-residue chain is Small ribosomal subunit protein uS7 (156 aa).

It belongs to the universal ribosomal protein uS7 family. Part of the 30S ribosomal subunit. Contacts proteins S9 and S11.

In terms of biological role, one of the primary rRNA binding proteins, it binds directly to 16S rRNA where it nucleates assembly of the head domain of the 30S subunit. Is located at the subunit interface close to the decoding center, probably blocks exit of the E-site tRNA. The chain is Small ribosomal subunit protein uS7 from Chelativorans sp. (strain BNC1).